A 277-amino-acid chain; its full sequence is Caspase-3 (277 aa).

At methionine 1 the chain carries N-acetylmethionine. 2 consecutive propeptides follow at residues methionine 1–aspartate 9 and serine 10–aspartate 28. Lysine 11 bears the N6-acetyllysine mark. A Phosphoserine modification is found at serine 26. Residues histidine 121 and cysteine 163 contribute to the active site. An S-nitrosocysteine; in inhibited form modification is found at cysteine 163.

Belongs to the peptidase C14A family. Heterotetramer that consists of two anti-parallel arranged heterodimers, each one formed by a 17 kDa (p17) and a 12 kDa (p12) subunit. Interacts with BIRC6/bruce. In terms of processing, cleavage by granzyme B, caspase-6, caspase-8 and caspase-10 generates the two active subunits. Additional processing of the propeptides is likely due to the autocatalytic activity of the activated protease. Active heterodimers between the small subunit of caspase-7 protease and the large subunit of caspase-3 also occur and vice versa. Post-translationally, S-nitrosylated on its catalytic site cysteine in unstimulated cell lines and denitrosylated upon activation of the Fas apoptotic pathway, associated with an increase in intracellular caspase activity. Fas therefore activates caspase-3 not only by inducing the cleavage of the caspase zymogen to its active subunits, but also by stimulating the denitrosylation of its active site thiol. Ubiquitinated by BIRC6; this activity is inhibited by DIABLO/SMAC. As to expression, expressed in heart, brain, liver, and muscle but not in kidney or testis.

Its subcellular location is the cytoplasm. It carries out the reaction Strict requirement for an Asp residue at positions P1 and P4. It has a preferred cleavage sequence of Asp-Xaa-Xaa-Asp-|- with a hydrophobic amino-acid residue at P2 and a hydrophilic amino-acid residue at P3, although Val or Ala are also accepted at this position.. Inhibited by BIRC6; following inhibition of BIRC6-caspase binding by DIABLO/SMAC, BIRC6 is subjected to caspase cleavage, leading to an increase in active caspases. Involved in the activation cascade of caspases responsible for apoptosis execution. At the onset of apoptosis, it proteolytically cleaves poly(ADP-ribose) polymerase PARP1 at a '216-Asp-|-Gly-217' bond. Cleaves and activates sterol regulatory element binding proteins (SREBPs) between the basic helix-loop-helix leucine zipper domain and the membrane attachment domain. Cleaves and activates caspase-6, -7 and -9 (CASP6, CASP7 and CASP9, respectively). Cleaves and inactivates interleukin-18 (IL18). Triggers cell adhesion in sympathetic neurons through RET cleavage. Cleaves IL-1 beta between an Asp and an Ala, releasing the mature cytokine which is involved in a variety of inflammatory processes. Cleaves and inhibits serine/threonine-protein kinase AKT1 in response to oxidative stress. Acts as an inhibitor of type I interferon production during virus-induced apoptosis by mediating cleavage of antiviral proteins CGAS, IRF3 and MAVS, thereby preventing cytokine overproduction. Also involved in pyroptosis by mediating cleavage and activation of gasdermin-E (GSDME). Cleaves XRCC4 and phospholipid scramblase proteins XKR4, XKR8 and XKR9, leading to promote phosphatidylserine exposure on apoptotic cell surface. Cleaves BIRC6 following inhibition of BIRC6-caspase binding by DIABLO/SMAC. The protein is Caspase-3 (Casp3) of Rattus norvegicus (Rat).